A 116-amino-acid chain; its full sequence is MFITKCSLHLKSFDLDVLKDSCALILKNKINLQNLKLTGPINLPTKIKKITVLRSPHIDKKSREQFEIRTYTKTIQIESLTKNTNDIINFMKQFENSFFFGLNIKVVFTYKKDVLL.

The protein belongs to the universal ribosomal protein uS10 family.

It localises to the mitochondrion. The protein is Small ribosomal subunit protein uS10m (RPS10) of Reclinomonas americana.